Reading from the N-terminus, the 75-residue chain is Metallothionein-like protein 1B (75 aa).

It belongs to the metallothionein superfamily. Type 15 family.

Metallothioneins have a high content of cysteine residues that bind various heavy metals. This chain is Metallothionein-like protein 1B (MT1B), found in Vicia faba (Broad bean).